The sequence spans 360 residues: Polyamine aminopropyltransferase 2 (360 aa).

One can recognise a PABS domain in the interval 68 to 299 (DIWDEISLKE…TDWGFHIAAN (232 aa)). Q94 is an S-methyl-5'-thioadenosine binding site. Positions 123 and 147 each coordinate spermidine. S-methyl-5'-thioadenosine is bound by residues D167 and 201 to 202 (DA). D219 (proton acceptor) is an active-site residue.

It belongs to the spermidine/spermine synthase family. Homodimer or homotetramer.

The protein localises to the cytoplasm. The catalysed reaction is S-adenosyl 3-(methylsulfanyl)propylamine + putrescine = S-methyl-5'-thioadenosine + spermidine + H(+). Its pathway is amine and polyamine biosynthesis; spermidine biosynthesis; spermidine from putrescine: step 1/1. Catalyzes the irreversible transfer of a propylamine group from the amino donor S-adenosylmethioninamine (decarboxy-AdoMet) to putrescine (1,4-diaminobutane) to yield spermidine. The polypeptide is Polyamine aminopropyltransferase 2 (Bacillus anthracis).